Consider the following 313-residue polypeptide: Protoheme IX farnesyltransferase (313 aa).

8 helical membrane-spanning segments follow: residues 32–52 (VMSL…GDFH), 53–73 (PVLA…AGAL), 120–140 (ILVN…YVVI), 153–173 (IVIG…AVTG), 180–200 (LLLF…LALF), 226–246 (ILLY…LGYF), 248–268 (AIYG…ALRV), and 284–304 (LFKF…LEVV).

It belongs to the UbiA prenyltransferase family. Protoheme IX farnesyltransferase subfamily.

The protein localises to the cell inner membrane. The enzyme catalyses heme b + (2E,6E)-farnesyl diphosphate + H2O = Fe(II)-heme o + diphosphate. It functions in the pathway porphyrin-containing compound metabolism; heme O biosynthesis; heme O from protoheme: step 1/1. Its function is as follows. Converts heme B (protoheme IX) to heme O by substitution of the vinyl group on carbon 2 of heme B porphyrin ring with a hydroxyethyl farnesyl side group. The polypeptide is Protoheme IX farnesyltransferase (Rhodopseudomonas palustris (strain HaA2)).